We begin with the raw amino-acid sequence, 1044 residues long: MPGIVVFRRRWSVGSDDLVLPAIFLFLLHTTWFVILSVVLFGLVYNPHEACSLNLVDHGRGYLGILLSCMIAEMAIIWLSMRGGILYTEPRDSMQYVLYVRLAILVIEFIYAIVGIVWLTQYYTSCNDLTAKNVTLGMVVCNWVVILSVCITVLCVFDPTGRTFVKLRATKRRQRNLRTYNLRHRLEEGQATSWSRRLKVFLCCTRTKDSQSDAYSEIAYLFAEFFRDLDIVPSDIIAGLVLLRQRQRAKRNAVLDEANNDILAFLSGMPVTRNTKYLDLKNSHEMLRYKEVCYYMLFALAAYGWPMYLMRKPTCGLCQLARSCSCCLCPARPRFAPGVTIEEDNCCGCNAIAIRRHFLDENMTAVDIVYTSCHDAVYETPFYVAVDHDKKKVVISIRGTLSPKDALTDLTGDAERLPVEGHRGTWLGHKGMVLSAEYIKKKLEQEMVLSQAFGRDLGRGTKHYGLIVVGHSLGAGTAAILSFLLRPQYPTLKCFAYSPPGGLLSEDAMEYSKEFVTAVVLGKDLVPRIGLSQLEGFRRQLLDVLQRSTKPKWRIIVGATKCIPKSELPEDQVEVTTLASTRLWTHPSDLTIALSASTPLYPPGRIIHVVHNHPAEQCCCCEQEEPTYFAIWGDNKAFNEVIISPAMLHEHLPYVVMEGLNKVLENYNKGKTALLSAAKVMVSPTEVDLTPELIFQQQPLPTGPPLPTGLALELPATEHRNSSVRSKSQSEMSLEGFSEGRLLSPVAAASAARQDPVELLLLSTQERLAAELQSRRAPLATMESLSDTESLYSFDSRRSSGFRSIRGSPSLHAVLERDEGHLFYIDPAIPEENPSLSSRTELLAADSLSKHSQDTQPLEAALGSGGVTPERPPSATIEEEEAAGGSEGGGVAPRGELALHNGRLGDSPSPQVLEFAEFIDSLFNLDSKSSSFQDLYCMMVPESPTSDYTEGPKSPSQQEILLRAQFEPNLVPKPPRLFAGSAEPSSGISLSPSFPLSSSGELMDLTPTGLSSQECLATDKIRTSTPTGHGASPTKQDDLVISAR.

The Cytoplasmic segment spans residues 1-22; sequence MPGIVVFRRRWSVGSDDLVLPA. The chain crosses the membrane as a helical span at residues 23–43; sequence IFLFLLHTTWFVILSVVLFGL. The Extracellular portion of the chain corresponds to 44 to 60; it reads VYNPHEACSLNLVDHGR. A helical membrane pass occupies residues 61 to 81; sequence GYLGILLSCMIAEMAIIWLSM. Topologically, residues 82–101 are cytoplasmic; it reads RGGILYTEPRDSMQYVLYVR. The chain crosses the membrane as a helical span at residues 102-122; that stretch reads LAILVIEFIYAIVGIVWLTQY. The Extracellular portion of the chain corresponds to 123-136; it reads YTSCNDLTAKNVTL. The N-linked (GlcNAc...) asparagine glycan is linked to N133. A helical transmembrane segment spans residues 137 to 157; sequence GMVVCNWVVILSVCITVLCVF. Residues 158 to 1044 are Cytoplasmic-facing; that stretch reads DPTGRTFVKL…KQDDLVISAR (887 aa). Residues S472 and D524 each act as charge relay system in the active site. S728, S730, S733, S744, S784, S786, S808, S810, S835, S849, and S954 each carry phosphoserine. The disordered stretch occupies residues 848–897; the sequence is LSKHSQDTQPLEAALGSGGVTPERPPSATIEEEEAAGGSEGGGVAPRGEL. The disordered stretch occupies residues 1013–1044; it reads QECLATDKIRTSTPTGHGASPTKQDDLVISAR. T1025 is modified (phosphothreonine).

The protein belongs to the AB hydrolase superfamily. Lipase family. In terms of assembly, interacts (via C-terminal) with CAMK2A; leading to the phosphorylation and inhibition of DAGLA enzymatic activity. Interacts (via PPXXF motif) with HOMER1 and HOMER2; this interaction is required for DAGLA membrane localization. The cofactor is Ca(2+). In terms of processing, phosphorylated at Ser-784 and Ser-810 by CAMK2A; phosphorylation by CAMK2A inhibits diacylglycerol lipase activity. Highly expressed by principal cells in the hippocampus. In embryonic brains, it is present in axonal tracts, while in adults it localizes to dendritic fields, correlating with the developmental change in requirement for 2-AG synthesis from the pre- to the postsynaptic compartment. Concentrated in heads of dendritic spines throughout the hippocampal formation. Highly compartmentalized into a wide perisynaptic annulus around the postsynaptic density of axospinous contacts but not intrasynaptically (at protein level).

It is found in the cell membrane. The protein localises to the cell projection. The protein resides in the dendritic spine membrane. Its subcellular location is the postsynaptic density membrane. It localises to the early endosome membrane. It catalyses the reaction a 1,2-diacyl-sn-glycerol + H2O = a 2-acylglycerol + a fatty acid + H(+). The enzyme catalyses 1-octadecanoyl-2-(5Z,8Z,11Z,14Z-eicosatetraenoyl)-sn-glycerol + H2O = 2-(5Z,8Z,11Z,14Z-eicosatetraenoyl)-glycerol + octadecanoate + H(+). It carries out the reaction 1,2-di-(9Z-octadecenoyl)-sn-glycerol + H2O = 2-(9Z-octadecenoyl)-glycerol + (9Z)-octadecenoate + H(+). The catalysed reaction is 1-(9Z-octadecenoyl)-2-(5Z,8Z,11Z,14Z-eicosatetraenoyl)-sn-glycerol + H2O = 2-(5Z,8Z,11Z,14Z-eicosatetraenoyl)-glycerol + (9Z)-octadecenoate + H(+). It catalyses the reaction 1-(9Z-octadecenoyl)-2-octadecanoyl-sn-glycerol + H2O = 2-octadecanoylglycerol + (9Z)-octadecenoate + H(+). The enzyme catalyses 1-(9Z-octadecenoyl)-2-(9Z,12Z-octadecadienoyl)-sn-glycerol + H2O = 2-(9Z,12Z-octadecadienoyl)-glycerol + (9Z)-octadecenoate + H(+). It carries out the reaction 1-(9Z-octadecenoyl)-2-O-(5Z,8Z,11Z,14Z-eicosatetraenyl)-sn-glycerol + H2O = 2-O-(5Z,8Z,11Z,14Z)-eicosatetraenylglycerol + (9Z)-octadecenoate + H(+). Its activity is regulated as follows. Inhibited by 1,2,3-triazole urea covalent inhibitor KT172, DH376 and DO34. Inhibited by p-hydroxy-mercuri-benzoate and HgCl(2), but not to PMSF. Also inhibited by RHC80267. Diacylglycerol lipase activity is inhibited by the phosphorylation of Ser-784 and Ser-810 by CAMK2A. Its function is as follows. Serine hydrolase that hydrolyzes arachidonic acid-esterified diacylglycerols (DAGs) to produce the principal endocannabinoid (eCB), 2-arachidonoylglycerol (2-AG). Preferentially hydrolyzes sn-1 fatty acids from diacylglycerols (DAG) that contain arachidonic acid (AA) esterified at the sn-2 position to biosynthesize 2-AG. Has negligible activity against other lipids including monoacylglycerols and phospholipids. Plays a key role in regulating 2-AG signaling in the central nervous system (CNS). Controls the activity of 2-AG as a retrograde messenger at neuronal synapses. Supports axonal growth during development and adult neurogenesis. Plays a role for eCB signaling in the physiological regulation of anxiety and depressive behaviors. Also regulates neuroinflammatory responses in the brain, in particular, LPS-induced microglial activation. This is Diacylglycerol lipase-alpha (Dagla) from Mus musculus (Mouse).